Reading from the N-terminus, the 236-residue chain is MLGLRAMLPKGKHFAVVLGNVSRQITLPHNCRCITSASWTRPQQSQPQNFQQNRWLSVKSTKTESDDALQRIYYGTLAPRMKMVKFFSLSTSLAGLAAQPILLEQGMKIGGTGMAVFLCTVGGFFTFVTPLLLHFITKKYVTELHYNPLTEEYTATTISLLLQKIKTTFRPNDVVVPEVPGMFTSFLVNKRPLFVDPALFDDPEHYVKIMGYDKPIDFKLDLTPNPEKSKTSEEKQ.

The N-terminal 64 residues, 1 to 64, are a transit peptide targeting the mitochondrion; it reads MLGLRAMLPK…WLSVKSTKTE (64 aa). 2 helical membrane passes run 83–103 and 116–136; these read MVKFFSLSTSLAGLAAQPILL and VFLCTVGGFFTFVTPLLLHFI.

It belongs to the TMEM70 family. Associates with mitochondrial complex I assembly intermediates during its biogenesis.

It is found in the mitochondrion membrane. Its function is as follows. Scaffold protein that participates in the c-ring assembly of mitochondrial ATP synthase (F(1)F(0) ATP synthase or complex V). Also binds the mitochondrial proton-transporting ATP synthase complex I and may play a role in the stability of its membrane-bound subassemblies. The sequence is that of Transmembrane protein 70 homolog, mitochondrial from Drosophila melanogaster (Fruit fly).